The sequence spans 972 residues: RNA polymerase-associated protein RapA (972 aa).

The region spanning 164–334 is the Helicase ATP-binding domain; sequence EVGRRYAPRV…FARLRLLDPD (171 aa). 177 to 184 is a binding site for ATP; it reads DEVGLGKT. A DEAH box motif is present at residues 280–283; the sequence is DEAH. A Helicase C-terminal domain is found at 493-671; it reads RVNWLLEMLK…HEPEALENLI (179 aa).

This sequence belongs to the SNF2/RAD54 helicase family. RapA subfamily. As to quaternary structure, interacts with the RNAP. Has a higher affinity for the core RNAP than for the holoenzyme. Its ATPase activity is stimulated by binding to RNAP.

In terms of biological role, transcription regulator that activates transcription by stimulating RNA polymerase (RNAP) recycling in case of stress conditions such as supercoiled DNA or high salt concentrations. Probably acts by releasing the RNAP, when it is trapped or immobilized on tightly supercoiled DNA. Does not activate transcription on linear DNA. Probably not involved in DNA repair. The sequence is that of RNA polymerase-associated protein RapA from Photobacterium profundum (strain SS9).